Here is a 313-residue protein sequence, read N- to C-terminus: Protein FixB (313 aa).

255–283 serves as a coordination point for FAD; that stretch reads LYLAVGISGQIQHMVGANASQTIFAINKD.

The protein belongs to the ETF alpha-subunit/FixB family. Heterodimer of FixA and FixB.

It participates in amine and polyamine metabolism; carnitine metabolism. Functionally, required for anaerobic carnitine reduction. May bring reductant to CaiA. The sequence is that of Protein FixB from Escherichia coli O7:K1 (strain IAI39 / ExPEC).